The following is a 362-amino-acid chain: Chromobox protein homolog 8 (362 aa).

Residues 11–69 (FAAEALLKRRIRKGRMEYLVKWKGWSQKYSTWEPEENILDARLLAAFEEREREMELYGP) form the Chromo domain. The span at 90–100 (KTYEFRSDSTR) shows a compositional bias: basic and acidic residues. Residues 90-197 (KTYEFRSDST…LGEPSAGLGE (108 aa)) are disordered. S110 carries the post-translational modification Phosphoserine. Over residues 142-162 (DPPRDRDRERDRGTSRVDDKP) the composition is skewed to basic and acidic residues. Phosphoserine occurs at positions 164 and 229. Residue Y234 is modified to Phosphotyrosine. A phosphoserine mark is found at S238, S284, S305, and S325.

In terms of assembly, component of a PRC1-like complex. Interacts with RING1, RNF2, PCGF1, PCGF2, PCGF3, BMI1, PCGF5, PCGF6 and PHC2. Interacts with histone H3. Interacts with MLLT3. Interacts with PHC2. Interacts (via chromodomain) with single-stranded RNA.

Its subcellular location is the nucleus. The protein resides in the chromosome. Functionally, component of a Polycomb group (PcG) multiprotein PRC1-like complex, a complex class required to maintain the transcriptionally repressive state of many genes, including Hox genes, throughout development. PcG PRC1 complex acts via chromatin remodeling and modification of histones; it mediates monoubiquitination of histone H2A 'Lys-119', rendering chromatin heritably changed in its expressibility. The polypeptide is Chromobox protein homolog 8 (Cbx8) (Mus musculus (Mouse)).